Here is an 872-residue protein sequence, read N- to C-terminus: Alanine--tRNA ligase (872 aa).

Zn(2+) contacts are provided by histidine 567, histidine 571, cysteine 669, and histidine 673.

This sequence belongs to the class-II aminoacyl-tRNA synthetase family. The cofactor is Zn(2+).

It is found in the cytoplasm. The enzyme catalyses tRNA(Ala) + L-alanine + ATP = L-alanyl-tRNA(Ala) + AMP + diphosphate. Catalyzes the attachment of alanine to tRNA(Ala) in a two-step reaction: alanine is first activated by ATP to form Ala-AMP and then transferred to the acceptor end of tRNA(Ala). Also edits incorrectly charged Ser-tRNA(Ala) and Gly-tRNA(Ala) via its editing domain. The chain is Alanine--tRNA ligase from Streptococcus pyogenes serotype M2 (strain MGAS10270).